Reading from the N-terminus, the 86-residue chain is Large ribosomal subunit protein uL30m (86 aa).

Positions 67–86 are disordered; it reads QQRELRKSNPGFIVEKRTID.

Belongs to the universal ribosomal protein uL30 family. As to quaternary structure, component of the mitochondrial large ribosomal subunit (mt-LSU). Mature yeast 74S mitochondrial ribosomes consist of a small (37S) and a large (54S) subunit. The 37S small subunit contains a 15S ribosomal RNA (15S mt-rRNA) and 34 different proteins. The 54S large subunit contains a 21S rRNA (21S mt-rRNA) and 46 different proteins.

Its subcellular location is the mitochondrion. In terms of biological role, component of the mitochondrial ribosome (mitoribosome), a dedicated translation machinery responsible for the synthesis of mitochondrial genome-encoded proteins, including at least some of the essential transmembrane subunits of the mitochondrial respiratory chain. The mitoribosomes are attached to the mitochondrial inner membrane and translation products are cotranslationally integrated into the membrane. The chain is Large ribosomal subunit protein uL30m (MRPL33) from Saccharomyces cerevisiae (strain ATCC 204508 / S288c) (Baker's yeast).